Here is a 685-residue protein sequence, read N- to C-terminus: Translation factor GUF1 homolog, mitochondrial (685 aa).

Residues 1–54 constitute a mitochondrion transit peptide; sequence MFSRLLNRGNGGVNKNITSGLLLRRTTTTTTRLSYINNSPTLSIRSFCSKSTTI. Residues 68–267 enclose the tr-type G domain; that stretch reads DRIRNFSIIA…AVIDRIPPPQ (200 aa). GTP contacts are provided by residues 77–84, 160–164, and 214–217; these read AHIDHGKT, DTPGH, and NKID.

The protein belongs to the TRAFAC class translation factor GTPase superfamily. Classic translation factor GTPase family. LepA subfamily.

Its subcellular location is the mitochondrion inner membrane. It carries out the reaction GTP + H2O = GDP + phosphate + H(+). In terms of biological role, promotes mitochondrial protein synthesis. May act as a fidelity factor of the translation reaction, by catalyzing a one-codon backward translocation of tRNAs on improperly translocated ribosomes. Binds to mitochondrial ribosomes in a GTP-dependent manner. In Dictyostelium discoideum (Social amoeba), this protein is Translation factor GUF1 homolog, mitochondrial (guf1).